Here is a 372-residue protein sequence, read N- to C-terminus: GTP cyclohydrolase 1 type 2 homolog (372 aa).

5 residues coordinate a divalent metal cation: His-67, His-68, Asp-106, His-332, and Glu-335.

This sequence belongs to the GTP cyclohydrolase I type 2/NIF3 family. As to quaternary structure, homohexamer.

The chain is GTP cyclohydrolase 1 type 2 homolog from Halalkalibacterium halodurans (strain ATCC BAA-125 / DSM 18197 / FERM 7344 / JCM 9153 / C-125) (Bacillus halodurans).